Here is a 255-residue protein sequence, read N- to C-terminus: Putative cysteine-rich repeat secretory protein 27 (255 aa).

Positions methionine 1–serine 26 are cleaved as a signal peptide. 2 Gnk2-homologous domains span residues tyrosine 33–serine 135 and tyrosine 141–phenylalanine 252.

Belongs to the cysteine-rich repeat secretory protein family.

The protein localises to the secreted. This is Putative cysteine-rich repeat secretory protein 27 (CRRSP27) from Arabidopsis thaliana (Mouse-ear cress).